A 172-amino-acid chain; its full sequence is MAPSFYHYLPVAMDERWEPKGWSIRRWWLVAAILVVLIGVVLVCLIVYFANAAHSEACKNGLRLQDECRNTTHLLKHQLTRAQDSLLQTEMQANSCNQTVMDLRDSLKKKVSQTQEQQARIKELENKIERLNQELENLRTQKEISTTVQVNSGGSVVVSSLLVLVAVLFLHF.

Topologically, residues 1 to 26 are cytoplasmic; that stretch reads MAPSFYHYLPVAMDERWEPKGWSIRR. Residue Lys20 forms a Glycyl lysine isopeptide (Lys-Gly) (interchain with G-Cter in ubiquitin) linkage. The helical; Signal-anchor for type II membrane protein transmembrane segment at 27–47 threads the bilayer; sequence WWLVAAILVVLIGVVLVCLIV. The Extracellular segment spans residues 48–152; sequence YFANAAHSEA…EISTTVQVNS (105 aa). Asn70 and Asn97 each carry an N-linked (GlcNAc...) asparagine glycan. A coiled-coil region spans residues 103-149; that stretch reads LRDSLKKKVSQTQEQQARIKELENKIERLNQELENLRTQKEISTTVQ. The GPI-anchor amidated serine moiety is linked to residue Ser152. The propeptide at 153 to 172 is removed in mature form; sequence GGSVVVSSLLVLVAVLFLHF.

Parallel homodimer; disulfide-linked. May form homotetramers under reducing conditions. Isoform 1 and isoform 2 form homodimers and also heterodimers with each other. Dimerization is essential for its antiviral activity. Interacts (via cytoplasmic domain) with ARHGAP44. Interacts with MMP14 (via C-terminal cytoplasmic tail). Interacts with LILRA4/ILT7. Interacts with RNF115. In terms of processing, N-glycosylated. The GPI anchor is essential for its antiviral activity. In terms of tissue distribution, ubiquitously expressed, with highest levels in brain and liver. Present in liver (at protein level).

It localises to the golgi apparatus. The protein resides in the trans-Golgi network. It is found in the cell membrane. The protein localises to the late endosome. Its subcellular location is the membrane raft. It localises to the cytoplasm. The protein resides in the apical cell membrane. Its function is as follows. IFN-induced antiviral host restriction factor which efficiently blocks the release of diverse mammalian enveloped viruses by directly tethering nascent virions to the membranes of infected cells. Acts as a direct physical tether, holding virions to the cell membrane and linking virions to each other. The tethered virions can be internalized by endocytosis and subsequently degraded or they can remain on the cell surface. In either case, their spread as cell-free virions is restricted. Its target viruses belong to diverse families, including retroviridae: human immunodeficiency virus type 1 (HIV-1), mouse mammary tumor virus (MMTV) and murine leukemia virus (MLV), filoviridae: ebola virus (EBOV), arenaviridae: lassa virus (LASV), and rhabdoviridae: vesicular stomatitis virus (VSV). Can inhibit cell surface proteolytic activity of MMP14 causing decreased activation of MMP15 which results in inhibition of cell growth and migration. Can stimulate signaling by LILRA4/ILT7 and consequently provide negative feedback to the production of IFN by plasmacytoid dendritic cells in response to viral infection. Plays a role in the organization of the subapical actin cytoskeleton in polarized epithelial cells. The sequence is that of Bone marrow stromal antigen 2 (Bst2) from Rattus norvegicus (Rat).